The chain runs to 868 residues: Thiol protease/hemagglutinin PrtT (868 aa).

The signal sequence occupies residues 1-27 (MKRIFYTLGLLLLCLPMLQAGPVTRSK). Catalysis depends on residues Cys-184 and His-327.

Belongs to the peptidase C10 family.

Functionally, appears to be specific for arginine-containing peptide bonds. Possesses hemagglutinin activity. The polypeptide is Thiol protease/hemagglutinin PrtT (prtT) (Porphyromonas gingivalis (Bacteroides gingivalis)).